The chain runs to 393 residues: MAKESYKRDKPHVNIGTIGHVDHGKTTLTAAITLVLSKQGLAQERDFGSIDKAPEERERGITISTAHVEYQTDKRHYAHIDCPGHADYIKNMITGAAQMDGAILVVAATDGPMPQTREHILLARQVNVPSLVVFLNKVDIADPELIELVELELRELLSQYDFPGDDIPIIKGSALKAMEGDAEGEKAILELMDAVDAFIPDPVRDVDKPFLMPVEDVFSISGRGTVGTGRIERGRIKLNEEVEIVGLRPTRKSVVTGIEMFQKLLDEGQAGDNAGLLLRGVDKTELERGMVIAKPGTIKPHTKFKAEVYILKKEEGGRHTPFFNGYRPQFYFRTTDVTGSVTLPEGVEMVMPGDNLAIEVELLAPIAMDEGLRFAIREGGRTVGAGSVTKINE.

A tr-type G domain is found at 10–203 (KPHVNIGTIG…AVDAFIPDPV (194 aa)). The tract at residues 19 to 26 (GHVDHGKT) is G1. 19-26 (GHVDHGKT) contacts GTP. Residue Thr26 coordinates Mg(2+). Residues 60-64 (GITIS) form a G2 region. A G3 region spans residues 81 to 84 (DCPG). GTP contacts are provided by residues 81-85 (DCPGH) and 136-139 (NKVD). A G4 region spans residues 136–139 (NKVD). The interval 173–175 (SAL) is G5.

The protein belongs to the TRAFAC class translation factor GTPase superfamily. Classic translation factor GTPase family. EF-Tu/EF-1A subfamily. Monomer.

It localises to the cytoplasm. The enzyme catalyses GTP + H2O = GDP + phosphate + H(+). Its function is as follows. GTP hydrolase that promotes the GTP-dependent binding of aminoacyl-tRNA to the A-site of ribosomes during protein biosynthesis. The chain is Elongation factor Tu from Chlorobium chlorochromatii (strain CaD3).